The following is a 425-amino-acid chain: Serine--tRNA ligase (425 aa).

230–232 is a binding site for L-serine; that stretch reads TSE. Residue 261-263 coordinates ATP; the sequence is RKE. L-serine is bound at residue Glu284. An ATP-binding site is contributed by 348 to 351; it reads EISS. Ser385 lines the L-serine pocket.

This sequence belongs to the class-II aminoacyl-tRNA synthetase family. Type-1 seryl-tRNA synthetase subfamily. Homodimer. The tRNA molecule binds across the dimer.

The protein resides in the cytoplasm. It carries out the reaction tRNA(Ser) + L-serine + ATP = L-seryl-tRNA(Ser) + AMP + diphosphate + H(+). The catalysed reaction is tRNA(Sec) + L-serine + ATP = L-seryl-tRNA(Sec) + AMP + diphosphate + H(+). The protein operates within aminoacyl-tRNA biosynthesis; selenocysteinyl-tRNA(Sec) biosynthesis; L-seryl-tRNA(Sec) from L-serine and tRNA(Sec): step 1/1. In terms of biological role, catalyzes the attachment of serine to tRNA(Ser). Is also able to aminoacylate tRNA(Sec) with serine, to form the misacylated tRNA L-seryl-tRNA(Sec), which will be further converted into selenocysteinyl-tRNA(Sec). The sequence is that of Serine--tRNA ligase from Wolbachia pipientis wMel.